Reading from the N-terminus, the 162-residue chain is Ribosomal RNA large subunit methyltransferase H (162 aa).

Glycine 108 provides a ligand contact to S-adenosyl-L-methionine.

The protein belongs to the RNA methyltransferase RlmH family. In terms of assembly, homodimer.

It is found in the cytoplasm. The enzyme catalyses pseudouridine(1915) in 23S rRNA + S-adenosyl-L-methionine = N(3)-methylpseudouridine(1915) in 23S rRNA + S-adenosyl-L-homocysteine + H(+). Functionally, specifically methylates the pseudouridine at position 1915 (m3Psi1915) in 23S rRNA. This chain is Ribosomal RNA large subunit methyltransferase H, found in Methylobacterium nodulans (strain LMG 21967 / CNCM I-2342 / ORS 2060).